A 165-amino-acid polypeptide reads, in one-letter code: MKTPRLPIAIQQAVMRRLRENLAQANLKLDRHYPEPKLVYTQRGTSAGTAWLESYEIRLNPVLLLENIDTFIAEVVPHELAHLLVWKHFGRKAPHGKEWKWMMESVLGVPARRTHQFALQSVRRNTFPYHCQCQQHQLTVRRHNRVVRGEAVYRCVHCGEPLVAG.

In terms of domain architecture, SprT-like spans Leu-22–Val-163. His-78 contacts Zn(2+). Glu-79 is an active-site residue. Position 82 (His-82) interacts with Zn(2+).

Belongs to the SprT family. The cofactor is Zn(2+).

Its subcellular location is the cytoplasm. The polypeptide is Protein SprT (Salmonella agona (strain SL483)).